The following is a 435-amino-acid chain: Enolase (435 aa).

(2R)-2-phosphoglycerate is bound at residue glutamine 163. The active-site Proton donor is glutamate 205. 3 residues coordinate Mg(2+): aspartate 243, glutamate 292, and aspartate 319. Positions 344, 373, 374, and 395 each coordinate (2R)-2-phosphoglycerate. Residue lysine 344 is the Proton acceptor of the active site.

This sequence belongs to the enolase family. It depends on Mg(2+) as a cofactor.

It is found in the cytoplasm. It localises to the secreted. The protein localises to the cell surface. It carries out the reaction (2R)-2-phosphoglycerate = phosphoenolpyruvate + H2O. It participates in carbohydrate degradation; glycolysis; pyruvate from D-glyceraldehyde 3-phosphate: step 4/5. In terms of biological role, catalyzes the reversible conversion of 2-phosphoglycerate (2-PG) into phosphoenolpyruvate (PEP). It is essential for the degradation of carbohydrates via glycolysis. The polypeptide is Enolase (Streptococcus uberis (strain ATCC BAA-854 / 0140J)).